The following is a 341-amino-acid chain: DNA-directed RNA polymerase subunit alpha (341 aa).

An alpha N-terminal domain (alpha-NTD) region spans residues 1 to 237 (MLSLSKNWNA…EQLQLFISFE (237 aa)). An alpha C-terminal domain (alpha-CTD) region spans residues 252 to 341 (FSPYLLKRVD…LSKRYEDSYN (90 aa)).

The protein belongs to the RNA polymerase alpha chain family. Homodimer. The RNAP catalytic core consists of 2 alpha, 1 beta, 1 beta' and 1 omega subunit. When a sigma factor is associated with the core the holoenzyme is formed, which can initiate transcription.

The catalysed reaction is RNA(n) + a ribonucleoside 5'-triphosphate = RNA(n+1) + diphosphate. Functionally, DNA-dependent RNA polymerase catalyzes the transcription of DNA into RNA using the four ribonucleoside triphosphates as substrates. This Rickettsia bellii (strain OSU 85-389) protein is DNA-directed RNA polymerase subunit alpha.